A 283-amino-acid chain; its full sequence is Polyamine aminopropyltransferase (283 aa).

In terms of domain architecture, PABS spans T5–S238. Q32 contacts S-methyl-5'-thioadenosine. Residues H63 and D87 each coordinate spermidine. S-methyl-5'-thioadenosine is bound by residues E107 and D139–G140. The active-site Proton acceptor is the D158. Residue D158 to D161 coordinates spermidine.

This sequence belongs to the spermidine/spermine synthase family. In terms of assembly, homodimer or homotetramer.

Its subcellular location is the cytoplasm. The catalysed reaction is S-adenosyl 3-(methylsulfanyl)propylamine + putrescine = S-methyl-5'-thioadenosine + spermidine + H(+). The protein operates within amine and polyamine biosynthesis; spermidine biosynthesis; spermidine from putrescine: step 1/1. Its function is as follows. Catalyzes the irreversible transfer of a propylamine group from the amino donor S-adenosylmethioninamine (decarboxy-AdoMet) to putrescine (1,4-diaminobutane) to yield spermidine. This chain is Polyamine aminopropyltransferase, found in Prochlorococcus marinus (strain MIT 9215).